The following is a 275-amino-acid chain: Large ribosomal subunit protein uL2 (275 aa).

The segment at 208 to 275 is disordered; it reads AGAKRWRGRR…NMIIRDRRKK (68 aa). Basic residues-rich tracts occupy residues 209 to 219 and 254 to 263; these read GAKRWRGRRPT and KGYKTRRNKR.

Belongs to the universal ribosomal protein uL2 family. Part of the 50S ribosomal subunit. Forms a bridge to the 30S subunit in the 70S ribosome.

In terms of biological role, one of the primary rRNA binding proteins. Required for association of the 30S and 50S subunits to form the 70S ribosome, for tRNA binding and peptide bond formation. It has been suggested to have peptidyltransferase activity; this is somewhat controversial. Makes several contacts with the 16S rRNA in the 70S ribosome. The protein is Large ribosomal subunit protein uL2 of Coxiella burnetii (strain CbuG_Q212) (Coxiella burnetii (strain Q212)).